We begin with the raw amino-acid sequence, 373 residues long: Queuine tRNA-ribosyltransferase (373 aa).

Asp-89 serves as the catalytic Proton acceptor. Substrate contacts are provided by residues 89–93 (DSGGF), Asp-143, Gln-192, and Gly-220. The interval 251–257 (GVGTPED) is RNA binding. Catalysis depends on Asp-270, which acts as the Nucleophile. An RNA binding; important for wobble base 34 recognition region spans residues 275-279 (TRNAR). Cys-308, Cys-310, Cys-313, and His-339 together coordinate Zn(2+).

This sequence belongs to the queuine tRNA-ribosyltransferase family. As to quaternary structure, homodimer. Within each dimer, one monomer is responsible for RNA recognition and catalysis, while the other monomer binds to the replacement base PreQ1. Zn(2+) serves as cofactor.

It catalyses the reaction 7-aminomethyl-7-carbaguanine + guanosine(34) in tRNA = 7-aminomethyl-7-carbaguanosine(34) in tRNA + guanine. It participates in tRNA modification; tRNA-queuosine biosynthesis. Its function is as follows. Catalyzes the base-exchange of a guanine (G) residue with the queuine precursor 7-aminomethyl-7-deazaguanine (PreQ1) at position 34 (anticodon wobble position) in tRNAs with GU(N) anticodons (tRNA-Asp, -Asn, -His and -Tyr). Catalysis occurs through a double-displacement mechanism. The nucleophile active site attacks the C1' of nucleotide 34 to detach the guanine base from the RNA, forming a covalent enzyme-RNA intermediate. The proton acceptor active site deprotonates the incoming PreQ1, allowing a nucleophilic attack on the C1' of the ribose to form the product. After dissociation, two additional enzymatic reactions on the tRNA convert PreQ1 to queuine (Q), resulting in the hypermodified nucleoside queuosine (7-(((4,5-cis-dihydroxy-2-cyclopenten-1-yl)amino)methyl)-7-deazaguanosine). The chain is Queuine tRNA-ribosyltransferase from Aliarcobacter butzleri (strain RM4018) (Arcobacter butzleri).